Here is a 507-residue protein sequence, read N- to C-terminus: Tryptophan aminotransferase-related protein 2 (507 aa).

The segment at 91 to 135 is disordered; the sequence is PPPHHHHHDAGLATRSSDAAVHRRARTASSMAPSTGKPAVTTDSV. Pyridoxal 5'-phosphate is bound by residues Tyr-169, 211 to 212, Asn-282, 304 to 307, 327 to 330, and Arg-338; these read ST, DLAY, and TVSK. Lys-330 carries the N6-(pyridoxal phosphate)lysine modification.

This sequence belongs to the alliinase family. The cofactor is pyridoxal 5'-phosphate. As to expression, widely expressed.

It catalyses the reaction L-tryptophan + 2-oxoglutarate = indole-3-pyruvate + L-glutamate. The protein operates within plant hormone metabolism; auxin biosynthesis. Its function is as follows. Probable tryptophan aminotransferase involved in auxin (IAA) biosynthesis. Required for auxin production to initiate multiple change in growth in response to environmental and developmental cues. Functions upstream of YUCCA1 in auxin biosynthesis. Required for polar auxin transport. This chain is Tryptophan aminotransferase-related protein 2, found in Oryza sativa subsp. japonica (Rice).